A 269-amino-acid chain; its full sequence is Ethylene-responsive transcription factor ERN1 (269 aa).

Positions 1-15 (MEIQFQQPNLQQHQK) are enriched in polar residues. 2 disordered regions span residues 1–36 (MEIQ…NKFV) and 128–157 (DVPA…LSSG). Residues 34-91 (KFVGVRQRPSGRWVAEIKDTTQKIRMWLGTFETAEEAARAYDEAACLLRGSNTRTNFI) constitute a DNA-binding region (AP2/ERF). Residues 128 to 146 (DVPAPSASTTSTSSNTSNS) show a composition bias toward low complexity.

This sequence belongs to the AP2/ERF transcription factor family. ERF subfamily.

Its subcellular location is the nucleus. Functionally, transcription factor involved in the symbiotic nodule signaling pathway in response to rhizobial stimulation. Functions as a transcriptional regulator required for root infection by symbiotic rhizobia, infection thread (IT) formation, and nodule development. May coordinate these processes. Functions downstream of the CCAMK-CYCLOPS complex. Probably not involved in arbuscular mycorrhizal (AM) symbiosis. The protein is Ethylene-responsive transcription factor ERN1 of Lotus japonicus (Lotus corniculatus var. japonicus).